The primary structure comprises 682 residues: L-type lectin-domain containing receptor kinase VI.2 (682 aa).

The N-terminal stretch at Met-1–Ala-26 is a signal peptide. Residues Gln-27–Val-310 lie on the Extracellular side of the membrane. The tract at residues Thr-29 to Ser-277 is legume-lectin like. A helical membrane pass occupies residues Ile-311–Phe-331. Residues Val-332 to Gln-682 are Cytoplasmic-facing. In terms of domain architecture, Protein kinase spans Phe-367 to Val-641. ATP-binding positions include Ile-373 to Val-381 and Lys-395. Asp-494 acts as the Proton acceptor in catalysis.

It in the C-terminal section; belongs to the protein kinase superfamily. Ser/Thr protein kinase family. In the N-terminal section; belongs to the leguminous lectin family. In terms of tissue distribution, strongly expressed in the vascular system and trichomes of the leaves. Also expressed in guard cells, anthers, stigmas and germinating seeds, but not found in petals or roots. Increased susceptibility to the bacteria Pseudomonas syringae, characterized by stronger necrotic symptoms and higher bacterial proliferation.

Its subcellular location is the cell membrane. It catalyses the reaction L-seryl-[protein] + ATP = O-phospho-L-seryl-[protein] + ADP + H(+). It carries out the reaction L-threonyl-[protein] + ATP = O-phospho-L-threonyl-[protein] + ADP + H(+). In terms of biological role, involved in negative regulation of abscisic acid response in seed germination. Its function is as follows. Involved in resistance response to the pathogenic bacteria Pseudomonas syringae. The chain is L-type lectin-domain containing receptor kinase VI.2 from Arabidopsis thaliana (Mouse-ear cress).